The chain runs to 142 residues: Large ribosomal subunit protein uL11 (142 aa).

This sequence belongs to the universal ribosomal protein uL11 family. As to quaternary structure, part of the ribosomal stalk of the 50S ribosomal subunit. Interacts with L10 and the large rRNA to form the base of the stalk. L10 forms an elongated spine to which L12 dimers bind in a sequential fashion forming a multimeric L10(L12)X complex. In terms of processing, one or more lysine residues are methylated.

Functionally, forms part of the ribosomal stalk which helps the ribosome interact with GTP-bound translation factors. This is Large ribosomal subunit protein uL11 from Shewanella sp. (strain W3-18-1).